The chain runs to 210 residues: Redox-sensing transcriptional repressor Rex (210 aa).

Residues 16–55 (VYSRHLTDVDRKGIVTISSGDIAEGVGVSPAQVRKDLAYF) constitute a DNA-binding region (H-T-H motif). 90-95 (GMGNLG) is a binding site for NAD(+).

This sequence belongs to the transcriptional regulatory Rex family. As to quaternary structure, homodimer.

The protein localises to the cytoplasm. Modulates transcription in response to changes in cellular NADH/NAD(+) redox state. The sequence is that of Redox-sensing transcriptional repressor Rex from Desulfitobacterium hafniense (strain DSM 10664 / DCB-2).